The chain runs to 320 residues: Small ribosomal subunit protein uS2 (320 aa).

Residues 1–22 (MADETTTDTPDVQDEDAPDEDA) are compositionally biased toward acidic residues. The interval 1–83 (MADETTTDTP…SSSEEETSHR (83 aa)) is disordered. A compositionally biased stretch (low complexity) spans 27 to 41 (DDTASDSTGEAAAAD). Acidic residues-rich tracts occupy residues 42–57 (TDAD…EDAP) and 65–78 (DDGD…SSEE).

It belongs to the universal ribosomal protein uS2 family.

The chain is Small ribosomal subunit protein uS2 from Salinibacter ruber (strain DSM 13855 / M31).